The chain runs to 217 residues: Ras-related protein Rab-39A (217 aa).

6 residues coordinate GTP: S17, G20, K21, S22, C23, and T44. S22 contacts Mg(2+). Residues 39 to 47 are switch-I; sequence PACDPTVGV. T44 and D68 together coordinate Mg(2+). 6 residues coordinate GTP: G71, H127, K128, D130, A158, and K159. The segment at 71–87 is switch-II; that stretch reads GQERFRSITRSYYRNSV. S-geranylgeranyl cysteine attachment occurs at residues C215 and C217. Cysteine methyl ester is present on C217.

Belongs to the small GTPase superfamily. Rab family. In terms of assembly, interacts (GDP-bound) with C9orf72; C9orf72 acts as a GEF for RAB39A. Interacts (GTP-bound) with HOPS complex components VPS39 and VPS41, and STX17; interaction between HOPS components and RAB39A contributes to obtaining a functional HOPS complex that promotes membrane fusion driven by STX17-SNAP29-VAMP8. Interacts with BECN1. Probably associates with the PI3K (PI3KC3/PI3K-III/class III phosphatidylinositol 3-kinase) complex. Interacts with UACA. Interacts with isoform a of RASSF1. Does not interact with isoform c of RASSF1. The cofactor is Mg(2+). Post-translationally, prenylated. Prenylation is required for association with cellular membranes.

It localises to the cell membrane. It is found in the cytoplasmic vesicle. The protein localises to the phagosome membrane. The protein resides in the lysosome membrane. Its subcellular location is the autolysosome membrane. It catalyses the reaction GTP + H2O = GDP + phosphate + H(+). Its activity is regulated as follows. Regulated by guanine nucleotide exchange factors (GEFs) including c9Orf72, which promote the exchange of bound GDP for free GTP. Regulated by GTPase activating proteins (GAPs) which increase the GTP hydrolysis activity. Inhibited by GDP dissociation inhibitors (GDIs). In terms of biological role, the small GTPases Rab are key regulators of intracellular membrane trafficking, from the formation of transport vesicles to their fusion with membranes. Rabs cycle between an inactive GDP-bound form and an active GTP-bound form that is able to recruit to membranes different sets of downstream effectors directly responsible for vesicle formation, movement, tethering and fusion. RAB39A regulates autophagosome-lysosome fusion via recruitment of the HOPS endosomal tethering complex onto lysosomes; this process involves lysosomal RAB39A and autophagosomal RAB2A recruitment of HOPS subcomplexes VPS41-VPS16-VPS18-VPS33A and VPS39-VPS11, respectively, which assemble into a functional complex to mediate membrane tethering and SNAREs-driven membrane fusion. Also negatively regulates lipopolysaccharide (LPS)-induced autophagosome formation in macrophages, possibly by implicating PI3K. Promotes the delivery of MHC-I molecules from the ER to phagosomes and the generation of peptide-loaded MHC-I complexes in phagosomes, thus enhancing antigen cross-presentation by dendritic cells. Plays a role in the maturation and acidification of phagosomes that engulf pathogens, such as S.aureus and M.tuberculosis. Plays a role in the fusion of phagosomes with lysosomes. May be involved in multiple neurite formation. In Homo sapiens (Human), this protein is Ras-related protein Rab-39A.